Reading from the N-terminus, the 468-residue chain is MAKTLYEKVFDAHVVYEGKNELPILYIDRHLIHEVTSPQAFSGLKMAKRRMARADLTLATIDHDVSTKSVDLNACSDMAKEQITTLMQNTKEFGVRLLGLGDKNQGIVHIVSPELGFTLPGVTLVCGDSHTATHGAFGALAFGIGTSEVEHVMATQTLKQAKLKTMKIECKGQFQKGVYAKDLILYLIAQYGTAKGTGYAIEFCGELIRNLSMEARMTLCNMAIEFGAKVGMIAPDEITFEYIKGKEFAPKGEEFQKYCEYWKSLRSDEGAKYDESITLDVSKIKPQISYGTNPSQVIGIDEKIPKISDFKNQSEQKSLLDALSYVNLEQDQVIEGVKIDIVFIGSCTNGRLEDLKIAADILKGRKIHKNVKALIVPGSMQVRKEAENLGLDKIFIEAGCEWRYAGCSMCLGMNDDKANSGQRVASTSNRNFVGRQGKGSITHLMSPASAAACAIEGVICDNRKYLGV.

[4Fe-4S] cluster-binding residues include Cys347, Cys407, and Cys410.

This sequence belongs to the aconitase/IPM isomerase family. LeuC type 1 subfamily. In terms of assembly, heterodimer of LeuC and LeuD. The cofactor is [4Fe-4S] cluster.

It catalyses the reaction (2R,3S)-3-isopropylmalate = (2S)-2-isopropylmalate. It participates in amino-acid biosynthesis; L-leucine biosynthesis; L-leucine from 3-methyl-2-oxobutanoate: step 2/4. Its function is as follows. Catalyzes the isomerization between 2-isopropylmalate and 3-isopropylmalate, via the formation of 2-isopropylmaleate. The sequence is that of 3-isopropylmalate dehydratase large subunit from Campylobacter jejuni subsp. jejuni serotype O:23/36 (strain 81-176).